The sequence spans 37 residues: Gene 40 protein (37 aa).

This Mycobacterium phage L5 (Mycobacteriophage L5) protein is Gene 40 protein (40).